The following is a 284-amino-acid chain: Isopentenyl-diphosphate Delta-isomerase II, chloroplastic (284 aa).

The N-terminal 45 residues, Met-1–Arg-45, are a transit peptide targeting the chloroplast. Ala-46 bears the N-acetylalanine mark. Lys-88 contributes to the substrate binding site. Positions 92 and 104 each coordinate Mg(2+). The Nudix hydrolase domain occupies Leu-102–Leu-254. The substrate site is built by Arg-123 and Lys-127. Residue Cys-139 is part of the active site. A substrate-binding site is contributed by Ser-140. Residues Ser-140 to Gly-170 carry the Nudix box motif. Mg(2+) is bound by residues Glu-199 and Glu-201. Residue Glu-201 is part of the active site.

It belongs to the IPP isomerase type 1 family. Mg(2+) serves as cofactor.

The protein resides in the plastid. The protein localises to the chloroplast. It catalyses the reaction isopentenyl diphosphate = dimethylallyl diphosphate. It functions in the pathway isoprenoid biosynthesis; dimethylallyl diphosphate biosynthesis; dimethylallyl diphosphate from isopentenyl diphosphate: step 1/1. It participates in porphyrin-containing compound metabolism; chlorophyll biosynthesis. Its function is as follows. Catalyzes the 1,3-allylic rearrangement of the homoallylic substrate isopentenyl (IPP) to its highly electrophilic allylic isomer, dimethylallyl diphosphate (DMAPP). The polypeptide is Isopentenyl-diphosphate Delta-isomerase II, chloroplastic (IPP2) (Arabidopsis thaliana (Mouse-ear cress)).